Reading from the N-terminus, the 76-residue chain is UPF0352 protein ECA2748 (76 aa).

Belongs to the UPF0352 family.

In Pectobacterium atrosepticum (strain SCRI 1043 / ATCC BAA-672) (Erwinia carotovora subsp. atroseptica), this protein is UPF0352 protein ECA2748.